A 504-amino-acid polypeptide reads, in one-letter code: Maturase K (504 aa).

The protein belongs to the intron maturase 2 family. MatK subfamily.

Its subcellular location is the plastid. It is found in the chloroplast. In terms of biological role, usually encoded in the trnK tRNA gene intron. Probably assists in splicing its own and other chloroplast group II introns. This chain is Maturase K, found in Erythrina crista-galli (Cockspur coral tree).